An 842-amino-acid polypeptide reads, in one-letter code: ATP-binding cassette sub-family B member 6 (842 aa).

At Met1 to Cys26 the chain is on the lumenal side. The tract at residues Met1–Trp205 is required for the lysosomal targeting. Residues Met1–Thr236 form a required for ATPase activity region. A disulfide bridge connects residues Cys8 and Cys26. Residues Phe27–Val47 traverse the membrane as a helical segment. Residues Leu48–Pro72 are Cytoplasmic-facing. The helical transmembrane segment at Tyr73–Gly93 threads the bilayer. The Lumenal segment spans residues Arg94–Tyr106. A helical membrane pass occupies residues Leu107–Ala127. At Glu128–Ser147 the chain is on the cytoplasmic side. Residues Ser148–Trp168 form a helical membrane-spanning segment. Over Asn169–Gln185 the chain is Lumenal. The helical transmembrane segment at Phe186–Ala206 threads the bilayer. The Cytoplasmic portion of the chain corresponds to Pro207–Phe263. A helical transmembrane segment spans residues Ile264–Ile284. One can recognise an ABC transmembrane type-1 domain in the interval Val265–Thr556. Residues Phe285 to Thr305 lie on the Lumenal side of the membrane. The helical transmembrane segment at Val306–Val326 threads the bilayer. Over Ser327 to Arg375 the chain is Cytoplasmic. A helical transmembrane segment spans residues Gly376–Ala396. Asp397 is a topological domain (lumenal). A helical transmembrane segment spans residues Ile398 to Phe418. The Cytoplasmic portion of the chain corresponds to Leu419–Gln499. The chain crosses the membrane as a helical span at residues Thr500–Val520. Residues Ser521–Asp529 are Lumenal-facing. Residues Phe530–Tyr550 traverse the membrane as a helical segment. The Cytoplasmic portion of the chain corresponds to Tyr551 to Ala842. Residues Ile590–Leu824 enclose the ABC transporter domain. Gly623–Ser630 is a binding site for ATP.

It belongs to the ABC transporter superfamily. ABCB family. Heavy Metal importer (TC 3.A.1.210) subfamily. In terms of assembly, homodimer. In terms of processing, N-glycosylated. As to expression, highly expressed in the liver, adrenal glands, and testis.

It is found in the cell membrane. The protein resides in the mitochondrion outer membrane. Its subcellular location is the endoplasmic reticulum membrane. It localises to the golgi apparatus membrane. The protein localises to the endosome membrane. It is found in the lysosome membrane. The protein resides in the late endosome membrane. Its subcellular location is the early endosome membrane. It localises to the secreted. The protein localises to the extracellular exosome. It is found in the mitochondrion. The protein resides in the endosome. Its subcellular location is the multivesicular body membrane. It localises to the melanosome membrane. The enzyme catalyses heme b(in) + ATP + H2O = heme b(out) + ADP + phosphate + H(+). It carries out the reaction coproporphyrin III(in) + ATP + H2O = coproporphyrin III(out) + ADP + phosphate + H(+). The catalysed reaction is pheophorbide a(in) + ATP + H2O = pheophorbide a(out) + ADP + phosphate + H(+). It catalyses the reaction coproporphyrinogen III(in) + ATP + H2O = coproporphyrinogen III(out) + ADP + phosphate + H(+). The enzyme catalyses protoporphyrin IX(in) + ATP + H2O = protoporphyrin IX(out) + ADP + phosphate + H(+). It carries out the reaction coproporphyrin I(in) + ATP + H2O = coproporphyrin I(out) + ADP + phosphate + H(+). The catalysed reaction is uroporphyrin I(in) + ATP + H2O = uroporphyrin I(out) + ADP + phosphate + H(+). It catalyses the reaction uroporphyrin III(in) + ATP + H2O = uroporphyrin III(out) + ADP + phosphate + H(+). In terms of biological role, ATP-dependent transporter that catalyzes the transport of a broad-spectrum of porphyrins from the cytoplasm to the extracellular space through the plasma membrane or into the vesicle lumen. May also function as an ATP-dependent importer of porphyrins from the cytoplasm into the mitochondria, in turn may participate in the de novo heme biosynthesis regulation and in the coordination of heme and iron homeostasis during phenylhydrazine stress. May also play a key role in the early steps of melanogenesis producing PMEL amyloid fibrils. In vitro, it confers to cells a resistance to toxic metal such as arsenic and cadmium and against chemotherapeutics agent such as 5-fluorouracil, SN-38 and vincristin. In addition may play a role in the transition metal homeostasis. The polypeptide is ATP-binding cassette sub-family B member 6 (Mesocricetus auratus (Golden hamster)).